We begin with the raw amino-acid sequence, 285 residues long: Polyamine aminopropyltransferase (285 aa).

The 237-residue stretch at 5-241 (DSWFTEHFQA…GWWSVTLSSK (237 aa)) folds into the PABS domain. An S-methyl-5'-thioadenosine-binding site is contributed by Q35. 2 residues coordinate spermidine: H66 and D90. Residues D110 and 141–142 (DG) contribute to the S-methyl-5'-thioadenosine site. The Proton acceptor role is filled by D160. 160–163 (DSTD) lines the spermidine pocket. P167 contributes to the S-methyl-5'-thioadenosine binding site.

It belongs to the spermidine/spermine synthase family. Homodimer or homotetramer.

It localises to the cytoplasm. It catalyses the reaction S-adenosyl 3-(methylsulfanyl)propylamine + putrescine = S-methyl-5'-thioadenosine + spermidine + H(+). It participates in amine and polyamine biosynthesis; spermidine biosynthesis; spermidine from putrescine: step 1/1. In terms of biological role, catalyzes the irreversible transfer of a propylamine group from the amino donor S-adenosylmethioninamine (decarboxy-AdoMet) to putrescine (1,4-diaminobutane) to yield spermidine. The polypeptide is Polyamine aminopropyltransferase (Xylella fastidiosa (strain 9a5c)).